The sequence spans 704 residues: Elongation factor G (704 aa).

The tr-type G domain maps to 8-290 (EKYRNIGICA…GVVRYLPAPN (283 aa)). Residues 17–24 (AHVDAGKT), 88–92 (DTPGH), and 142–145 (NKMD) contribute to the GTP site.

The protein belongs to the TRAFAC class translation factor GTPase superfamily. Classic translation factor GTPase family. EF-G/EF-2 subfamily.

The protein localises to the cytoplasm. Its function is as follows. Catalyzes the GTP-dependent ribosomal translocation step during translation elongation. During this step, the ribosome changes from the pre-translocational (PRE) to the post-translocational (POST) state as the newly formed A-site-bound peptidyl-tRNA and P-site-bound deacylated tRNA move to the P and E sites, respectively. Catalyzes the coordinated movement of the two tRNA molecules, the mRNA and conformational changes in the ribosome. The polypeptide is Elongation factor G (Francisella tularensis subsp. holarctica (strain FTNF002-00 / FTA)).